A 261-amino-acid polypeptide reads, in one-letter code: Serine/arginine-rich splicing factor 12 (261 aa).

The region spanning 10–88 (TSLFIRNVAD…RQIEIQFAQG (79 aa)) is the RRM domain. The disordered stretch occupies residues 86 to 261 (AQGDRKTPGQ…SRSYRHKNSW (176 aa)). The segment covering 88 to 109 (GDRKTPGQMKSKERHPCSPSDH) has biased composition (basic and acidic residues). 2 stretches are compositionally biased toward basic residues: residues 110 to 122 (RRSR…RTRS) and 178 to 191 (GRSR…RSKS). Over residues 192–209 (IGKSQSSSPQKQTSSGTK) the composition is skewed to low complexity. Over residues 230–239 (GYTNSETKVQ) the composition is skewed to polar residues. Over residues 240–261 (TAKHSHFRSHSRSRSYRHKNSW) the composition is skewed to basic residues.

This sequence belongs to the splicing factor SR family. Expressed in testis.

The protein localises to the nucleus. Its function is as follows. Splicing factor that seems to antagonize SR proteins in pre-mRNA splicing regulation. The protein is Serine/arginine-rich splicing factor 12 (SRSF12) of Homo sapiens (Human).